A 3165-amino-acid chain; its full sequence is MYKEAERPIEVWRTQVMDGPTWTALSESCRDRLFFASGEGGEHMTLDIIQPDSYTKIRLFRSGRFEVSVDGKSFGQGGNRYRFVFRYDSLLSTPFGYPAEDKEIALQDYNHKQLLGEMFLKLPDSYVDGRPIAEAFFRYVDDLKWDVGVFRDRRSLTELHLPASSGLTTAQVSVAKLEWPPLPIIQAQPTILAGIIDNFKICFPVNGKWIYGQGLSWTRYDGDASVPTSLLSNRQHARFWNEKDIPTGLKLSKEGFIKLWAQKSRKWQDHMARSIGLSHEAAVELVRATRVNEAKPHLVPMEEAKEAPRQQLVPRRSTFVDNHEEEVEIDTLRVPVEEGRCFELLFNNQVTPAIFDKKPLLKDVLGVFEENVCTMDSLEISHSDQCVHIVAGETFRNYDEIKAVLEVILENEPDILVGAEEGSVADYVKAGKHFLFENHQWVRNGLKLAKGLAEPGQRAKDNTNPSTPRPIEDADYIHPFDNGQPLPGRSDQWVSGFEVTRLRHHDEMPHIRSVRNTGIHGLPGDFLSNYPRLPTPVFHRLRDLWDDVIGILMKLEFGDNCSPVLNVTANADWVRSETTINFISDQPGKAQSRPREDGGFDILVPCRGIATRSIRLLPLFIRLPNRFRAVALLNGRQSDYDNYGWPVFNPVIPLPQMDSFYVEAVAAGRSMYPPGFLLGRYDALEYLVHTATVYGAEEAFLLPFTHHVRVYPPPRPGREIPFGSWCKNYKFEAERFWYDADWKLRVHETNHDFDRLIEITKTCRRNPPEENLQAKLEDTARKVCSVWQYNIMIASSVAFLVPLYFTLYVPYLQFYLHVDPGDYILLPPVLWLVWTNLCYGYACDAWCRLFFFVEEAGKKELVHSSEEFSSDPSSTLLIPTMGTRGDHVPPRFFANMAVLAGVKTHLLKLQTATYGDLENLKKGKLGSLLPGYLQNHYSVLRGYKAAFTPHVELDMPNATSYNLAPPRSYINKIRYLTDENRSGASMIDRAVTWFAEELADTFWPDWQIGCLRGCNLPRSADGVSLITKQPNLKTGKIGWLHGSADPAVVPKDIRDKYPLVPNGDHNEIFRHYDKIYMPGGAGAVQTAIACGCEVVVTDVNLDRDYHTMPTQKDFHQPSILPYFAWLWRQGFDVKLPRVLLVIGWLKFHYSIRYKHLEFAADFVIRAGLFWWYGCLHLLPFMAAAIMAPRFVKKYLVGMAWLTEPGLLMLKALWRFPIFMVTPRWMLPFIVTVSVYNWWWPLSQDGLNYASKRFELIFEPVTRGKHTFSYPFGHWCLRDTNSMIVYEGKFVNPSETSIGSPFKLSKSVRPVRPGAVFHLVPFHVQKLLDSMDEAPLPYSANHNCTTVILKGIMYRSALGFVFAYMVSWAVYLVLRPPQAAATVYHWVYPERSWDTSRLYHLLLGFAAGGTVPMEVIDEEHVEEKPSVAGQSEPAAEIDNDKISDYDQEWWGSQDSIDTVVNDLCYLLSFLKDTAIPEEVKLDVVELAYTQLVQDEKERIPEPKGTKILDMPNWKPGNWAKLIDETHRVLSQFTQYTPRVLNELVVWLKGLGENLYRVAEPILMLLVRAMRAAKSVSDRATRSVYHCLCHWLDVMYGGSAPTRVKTVWGLTGLVASGMTSQKAILAQNIAMMEYQGRGNFLDDYDNFVSNIKEPGKGLPGINTIGGPQRRPIRYKNPVMSHQAAEICGLKPGEYEVDDRYQERINDYLAEGIPQAVDGVLFGDRNPDRIARSISRYEPEYSGCSPEDKALVEDTARAMFEQWPEVFADRDIMLPKGVELYIKEKYSAGTPFISSFYKSRKALKQAGVMDVIRKNALECISTGKYPTQFYHAFAKSQAVPGQPLLAPRMKDLRTVVSEDLSAYMVDQIFQIEANKRITWETYGAGSGMPLSQSMARIWDELHDLRKREGGQFIIADATAYDSNCKPALFHGAGKLVELGFQNHPSGKGRQFAQVVQCKFEAMQNAWVMGITEPSYTALTFHVPDVAVRHELESKYPAHFATFSELLAHNNVNVTEWKRLSWEERKACARDMQAVPGKVFLTNDPALRLQGSSWQGSFTTEPKRDEFRKYQTYFYDSKAAMREDIKRIVFANREVISNVHHKNRGGGTGQSATSWDNTATFKLGVISAWARATGKPPKDFFCSNRLYNTSDDTVWWSKDLLSSAEVDRFKQAAADFGILLEIGSTKKITEVEYLSKLPRRPTAEDSADYRAWRQGRIENMRSSGRFSEEQLLSIEREQLPQFLMVQNPTAILMRRTAFRYYQSSPSKFLYTSCERGAGHALVTAFQPALYKRFAIEYAEDLNRLCKEHHINQRYELVSQQDRMKMQVINVNPNWKRNFKLSPRQEAFLRWIRQAKFPSYRQVLDIHLRIRDPDPSAHDRFIAKLDRAWRNPDEGIRDIVDGVYRYTDMIPEEFKRFMPSTDMLYAENPWHTHNQYVEKFIYLKLLETTTVDELTFAQFDAVAKESPYGICMNTIKFWEDLRDPDYLKDLLASEAMIDKVRIYQGMTVIISAMYFAMHWVELFIQSLFLIGPLYNLFMWSFWGLSKVYGLANTFYWHGKARSSREISSILPRDPYMWSKRFVSTMADFIPERFALGIVPVTLVLDGLAEIIEVLFGRMWRLFANLKSVGTDFSDARSGKSLNVPSNPWAAYAHTYATKAIEHGHVTVAAKTASGKSTFFPAAVWAERRNIGIKKLWIVMPRKILRDNWEIPFDIRSQIVKRGKTLDPSADIYVTTYGHFRTRIGGLVPRDNLVFFDEFHEMDGFMLQDVEDWKGPTIFMSATPVALHGMAGIPFLEPTLPKRFNLTVYKVDSDDVLEMWNRARNQFADQPELLARPMIIVPTYNELKKTIAGLENLDRSITWHEVSSNSPLVPKTGGLVCTPYVQTGIDIKPAPSILIDSGRDVIVHKGRLVTPHPYTDEKTNEQRVNRVGRTMDGVVIQPQLAGTGNPPVKYPSGIFFSSELVAGQYKVPRLTKVNGCVHPELPYMSIKYTSELSDPAKAREEEQSVTKSLLFIHLMALAGVRQSEWALRYNRYFELHLPFGEDEDHLERILTSGKLRYANHIPVDMAMQLLGNGHVTWGIGGVPTITRPRYPCDGMWVEDPSSRKSYAHKVLLHQREHAEIGMWQAQVNELRAQNLALQSQLRSACTRRSTAGRILRHTRPPDIPVCG.

The Peptidase C8 domain occupies 271–418; the sequence is MARSIGLSHE…LENEPDILVG (148 aa). Active-site for papain-like protease p48 activity residues include Cys341 and His388. The disordered stretch occupies residues 453 to 472; sequence AEPGQRAKDNTNPSTPRPIE. The next 6 membrane-spanning stretches (helical) occupy residues 791–811, 823–843, 1166–1186, 1193–1213, 1215–1235, and 1356–1376; these read IMIASSVAFLVPLYFTLYVPY, YILLPPVLWLVWTNLCYGYAC, AGLFWWYGCLHLLPFMAAAIM, KYLVGMAWLTEPGLLMLKALW, FPIFMVTPRWMLPFIVTVSVY, and ALGFVFAYMVSWAVYLVLRPP. Residues 1793-2208 form an RNA-directed RNA polymerase region; that stretch reads FYKSRKALKQ…AEDSADYRAW (416 aa). 3 helical membrane-spanning segments follow: residues 2495–2515, 2517–2537, and 2590–2610; these read VRIYQGMTVIISAMYFAMHWV, LFIQSLFLIGPLYNLFMWSFW, and LGIVPVTLVLDGLAEIIEVLF. One can recognise a Helicase ATP-binding domain in the interval 2651–2796; that stretch reads ATKAIEHGHV…IPFLEPTLPK (146 aa). 2664–2671 provides a ligand contact to ATP; that stretch reads AKTASGKS. The DEFH box motif lies at 2751-2754; it reads DEFH.

This sequence in the C-terminal section; belongs to the DEAD box helicase family. In terms of processing, papain-like protease p48 is autocatalytically processed. The putative RNA-directed RNA polymerase/helicase may be further processed.

The protein resides in the host membrane. The enzyme catalyses RNA(n) + a ribonucleoside 5'-triphosphate = RNA(n+1) + diphosphate. The catalysed reaction is ATP + H2O = ADP + phosphate + H(+). Functionally, papain-like protease p48 is a cysteine protease of the peptidase family C8. This is ORFB polyprotein from Cryphonectria hypovirus 1 (strain EP713) (CHV-1/EP713).